A 382-amino-acid chain; its full sequence is Dual-specificity RNA methyltransferase RlmN (382 aa).

The active-site Proton acceptor is the glutamate 96. The region spanning 102–342 (QGKRGTLCVS…VRTTRGEDID (241 aa)) is the Radical SAM core domain. Cysteine 109 and cysteine 345 are joined by a disulfide. Residues cysteine 116, cysteine 120, and cysteine 123 each contribute to the [4Fe-4S] cluster site. S-adenosyl-L-methionine contacts are provided by residues 170-171 (GE), serine 202, 224-226 (SLH), and asparagine 302. Residue cysteine 345 is the S-methylcysteine intermediate of the active site.

This sequence belongs to the radical SAM superfamily. RlmN family. The cofactor is [4Fe-4S] cluster.

The protein resides in the cytoplasm. It catalyses the reaction adenosine(2503) in 23S rRNA + 2 reduced [2Fe-2S]-[ferredoxin] + 2 S-adenosyl-L-methionine = 2-methyladenosine(2503) in 23S rRNA + 5'-deoxyadenosine + L-methionine + 2 oxidized [2Fe-2S]-[ferredoxin] + S-adenosyl-L-homocysteine. The catalysed reaction is adenosine(37) in tRNA + 2 reduced [2Fe-2S]-[ferredoxin] + 2 S-adenosyl-L-methionine = 2-methyladenosine(37) in tRNA + 5'-deoxyadenosine + L-methionine + 2 oxidized [2Fe-2S]-[ferredoxin] + S-adenosyl-L-homocysteine. Its function is as follows. Specifically methylates position 2 of adenine 2503 in 23S rRNA and position 2 of adenine 37 in tRNAs. m2A2503 modification seems to play a crucial role in the proofreading step occurring at the peptidyl transferase center and thus would serve to optimize ribosomal fidelity. The polypeptide is Dual-specificity RNA methyltransferase RlmN (Pseudomonas syringae pv. syringae (strain B728a)).